The primary structure comprises 380 residues: Protein Wnt-5a (380 aa).

Residues 1–37 (MKKPIGILSPGVALGTAGGAMSSKFFLMALATFFSFA) form the signal peptide. Residues 38 to 61 (QVVIEANSWWSLGMNNPVQMSEVH) constitute a propeptide that is removed on maturation. A disulfide bridge links C104 with C115. Residues N114 and N120 are each glycosylated (N-linked (GlcNAc...) asparagine). Disulfide bonds link C154-C162, C164-C182, C238-C252, C240-C247, C309-C340, C325-C335, C339-C379, C355-C370, C357-C367, and C362-C363. S244 is lipidated: O-palmitoleoyl serine; by PORCN. N-linked (GlcNAc...) asparagine glycosylation is found at N312 and N326.

It belongs to the Wnt family. In terms of assembly, forms a soluble 1:1 complex with AFM; this prevents oligomerization and is required for prolonged biological activity. The complex with AFM may represent the physiological form in body fluids. Homooligomer; disulfide-linked, leading to inactivation (in vitro). Interacts with PORCN. Interacts with WLS. Interacts with glypican GCP3. Interacts with PKD1 (via extracellular domain). Interacts with TMEM67. In terms of processing, glycosylation is necessary for secretion but not for activity. Post-translationally, palmitoleoylation is required for efficient binding to frizzled receptors. Depalmitoleoylation leads to Wnt signaling pathway inhibition. Proteolytic processing by TIKI1 and TIKI2 promotes oxidation and formation of large disulfide-bond oligomers, leading to inactivation of WNT5A.

The protein resides in the secreted. The protein localises to the extracellular space. It is found in the extracellular matrix. Its function is as follows. Ligand for members of the frizzled family of seven transmembrane receptors. Can activate or inhibit canonical Wnt signaling, depending on receptor context. In the presence of FZD4, activates beta-catenin signaling. In the presence of ROR2, inhibits the canonical Wnt pathway by promoting beta-catenin degradation through a GSK3-independent pathway which involves down-regulation of beta-catenin-induced reporter gene expression. Suppression of the canonical pathway allows chondrogenesis to occur and inhibits tumor formation. Stimulates cell migration. Decreases proliferation, migration, invasiveness and clonogenicity of carcinoma cells and may act as a tumor suppressor. Mediates motility of melanoma cells. Required during embryogenesis for extension of the primary anterior-posterior axis and for outgrowth of limbs and the genital tubercle. Inhibits type II collagen expression in chondrocytes. This Rattus norvegicus (Rat) protein is Protein Wnt-5a (Wnt5a).